Here is a 367-residue protein sequence, read N- to C-terminus: Ribosomal RNA large subunit methyltransferase M (367 aa).

Residues Ser188, 221 to 224 (CPGG), Asp240, Asp260, and Asp277 contribute to the S-adenosyl-L-methionine site. The Proton acceptor role is filled by Lys306.

This sequence belongs to the class I-like SAM-binding methyltransferase superfamily. RNA methyltransferase RlmE family. RlmM subfamily. Monomer.

The protein localises to the cytoplasm. It carries out the reaction cytidine(2498) in 23S rRNA + S-adenosyl-L-methionine = 2'-O-methylcytidine(2498) in 23S rRNA + S-adenosyl-L-homocysteine + H(+). Catalyzes the 2'-O-methylation at nucleotide C2498 in 23S rRNA. The protein is Ribosomal RNA large subunit methyltransferase M of Serratia proteamaculans (strain 568).